We begin with the raw amino-acid sequence, 343 residues long: Flavonoid 3'-O-methyltransferase FOMT (343 aa).

The S-adenosyl-L-homocysteine site is built by Gly184, Asp207, Asp227, Met228, Met240, and Lys241. The active-site Proton acceptor is the His245. Residues Glu273 and Glu305 contribute to the active site.

Belongs to the class I-like SAM-binding methyltransferase superfamily. Cation-independent O-methyltransferase family. Homodimer.

It carries out the reaction 3',5-dihydroxy-3,4',7-trimethoxyflavone + S-adenosyl-L-methionine = 5-hydroxy-3,7,3',4'-tetramethoxyflavone + S-adenosyl-L-homocysteine + H(+). The protein operates within flavonoid metabolism. Its activity is regulated as follows. Inhibited by nickel (NiCl(2) and NiSO(4)) and para-chloromercuribenzoate. In terms of biological role, catalyzes the 3'- or 5'-O-methylation of partially methylated flavonols, but does not accept quercetin or caffeate as substrates for methylation. This is Flavonoid 3'-O-methyltransferase FOMT from Chrysosplenium americanum (American golden saxifrage).